A 267-amino-acid polypeptide reads, in one-letter code: Sepiapterin reductase (267 aa).

An N-acetylmethionine modification is found at Met1. 20-26 serves as a coordination point for NADP(+); the sequence is GASRGFG. Position 38 is a phosphoserine (Ser38). NADP(+)-binding positions include 48-49 and 75-76; these read RN and DL. Substrate contacts are provided by residues 163-164 and Tyr176; that span reads SI. An NADP(+)-binding site is contributed by Lys180. The residue at position 201 (Ser201) is a Phosphoserine. Residue Gly205 coordinates substrate. NADP(+) is bound at residue 207-212; that stretch reads LDTDMQ. Ser219 is subject to Phosphoserine. Residue Asp263 participates in substrate binding.

This sequence belongs to the sepiapterin reductase family. In terms of assembly, homodimer.

Its subcellular location is the cytoplasm. It catalyses the reaction L-erythro-7,8-dihydrobiopterin + NADP(+) = L-sepiapterin + NADPH + H(+). It carries out the reaction (6R)-L-erythro-5,6,7,8-tetrahydrobiopterin + 2 NADP(+) = 6-pyruvoyl-5,6,7,8-tetrahydropterin + 2 NADPH + 2 H(+). Catalyzes the final one or two reductions in tetra-hydrobiopterin biosynthesis to form 5,6,7,8-tetrahydrobiopterin. The sequence is that of Sepiapterin reductase (SPR) from Bos taurus (Bovine).